A 385-amino-acid polypeptide reads, in one-letter code: POU domain, class 3, transcription factor 2-B (385 aa).

Disordered regions lie at residues 106–136, 149–209, and 351–385; these read LVHP…SSNG, NGMI…TPTS, and EKRM…TSVQ. The span at 122–136 shows a compositional bias: polar residues; it reads STGSTHLSSMASSNG. Positions 165 to 178 are enriched in basic and acidic residues; the sequence is LRDSHDDHHGDHGH. Over residues 179–196 the composition is skewed to low complexity; sequence QQPSQTQQQQQQHSQLQG. A POU-specific domain is found at 204 to 278; it reads EDTPTSDDLE…LLNKWLEEAD (75 aa). The segment at residues 296–355 is a DNA-binding region (homeobox); the sequence is KRKKRTSIEVSVKGALESHFLKCPKPAAQEITSLADSLQLEKEVVRVWFCNRRQKEKRMT.

It belongs to the POU transcription factor family. Class-3 subfamily. In terms of tissue distribution, expressed in the developing brain and spinal cord. Also found in a restricted region of the auditory vesicle during development. In the adult, expression is restricted to the brain.

Its subcellular location is the nucleus. In terms of biological role, transcription factor that may be implicated in patterning of the central nervous system during early development. In Xenopus laevis (African clawed frog), this protein is POU domain, class 3, transcription factor 2-B (pou3f2-b).